Here is a 196-residue protein sequence, read N- to C-terminus: MKVGVLALQGAFREHQKVLAACGAESVQVRKPEQLEDISALVIPGGESTTIGKLLLEFNLFEPLVKLGQGGLPVFGTCAGMILLAREIAGSGQPRLGLMDISVERNAFGRQVESFEADLDIPVLGEEPFRAVFIRAPYIIEAGGGVEVLARFGEKIVMARQGRCLAAAFHPELTGDLRIHRYFLEKCVRAGQNCKG.

46–48 (GES) lines the L-glutamine pocket. C78 functions as the Nucleophile in the catalytic mechanism. Residues R105 and 134–135 (IR) each bind L-glutamine. Residues H170 and E172 each act as charge relay system in the active site.

It belongs to the glutaminase PdxT/SNO family. In terms of assembly, in the presence of PdxS, forms a dodecamer of heterodimers. Only shows activity in the heterodimer.

The enzyme catalyses aldehydo-D-ribose 5-phosphate + D-glyceraldehyde 3-phosphate + L-glutamine = pyridoxal 5'-phosphate + L-glutamate + phosphate + 3 H2O + H(+). It catalyses the reaction L-glutamine + H2O = L-glutamate + NH4(+). It functions in the pathway cofactor biosynthesis; pyridoxal 5'-phosphate biosynthesis. Catalyzes the hydrolysis of glutamine to glutamate and ammonia as part of the biosynthesis of pyridoxal 5'-phosphate. The resulting ammonia molecule is channeled to the active site of PdxS. The protein is Pyridoxal 5'-phosphate synthase subunit PdxT of Pelotomaculum thermopropionicum (strain DSM 13744 / JCM 10971 / SI).